Consider the following 640-residue polypeptide: EF-hand domain-containing protein 1 (640 aa).

The segment at 1–45 (MVSNPVHGLPFLPGTSFKDSTKTAFHRSQTLSYRNGYAIVRRPTV) is required for its localization in the mitotic spindle and interaction with alpha-tubulin. DM10 domains are found at residues 93–198 (DKKV…ESQG), 239–359 (DKQV…KEKF), and 416–520 (DNKV…ESNA). The interval 535-554 (VRKREAPAPEAESKQTEKDP) is disordered. Residues 538 to 554 (REAPAPEAESKQTEKDP) are compositionally biased toward basic and acidic residues. One can recognise an EF-hand domain in the interval 574–609 (SCKDNIREAFQIYDKEASGYVDRDMFFKICESLNVP).

Microtubule inner protein component of sperm flagellar doublet microtubules. Interacts with the C-terminus of CACNA1E. Interacts with alpha-tubulin. Widely expressed. Not detected in lymphocytes.

It is found in the cytoplasm. Its subcellular location is the cytoskeleton. It localises to the cilium axoneme. The protein resides in the flagellum axoneme. The protein localises to the microtubule organizing center. It is found in the centrosome. Its subcellular location is the spindle. It localises to the spindle pole. Its function is as follows. Microtubule inner protein (MIP) part of the dynein-decorated doublet microtubules (DMTs) in cilia axoneme, which is required for motile cilia beating. Microtubule-associated protein which regulates cell division and neuronal migration during cortical development. Necessary for radial and tangential cell migration during brain development, possibly acting as a regulator of cell morphology and process formation during migration. May enhance calcium influx through CACNA1E and stimulate programmed cell death. This chain is EF-hand domain-containing protein 1, found in Homo sapiens (Human).